The primary structure comprises 161 residues: Extracellular giant hemoglobin major globin subunit B1 (161 aa).

The N-terminal stretch at 1 to 16 (MTILVLFLSCAALASA) is a signal peptide. The Globin domain maps to 18–161 (CCSRGDAEVV…YIAAGIGAGL (144 aa)). Cys-19 and Cys-149 form a disulfide bridge. Heme b is bound at residue His-112.

The protein belongs to the globin family. The 400 kDa hemoglobin consists of a spherical 24-mer arranged as a double layer of dome-shaped dodecamers. Each dodecamer is composed of the 3-fold trimer of the tetramer A1-A2-B1-B2 having one intra-tetramer (A1-B2) disulfide bond and one inter-tetramer (B1-B2) disulfide bond per tetramer.

It localises to the secreted. The extracellular giant hemoglobin is able to bind and transport oxygen and sulfide simultaneously and reversibly at two different sites. This is Extracellular giant hemoglobin major globin subunit B1 (ghbB1) from Oligobrachia mashikoi (Beard worm).